Here is a 392-residue protein sequence, read N- to C-terminus: N-acetylneuraminate epimerase (392 aa).

Residues Met1–Ala35 form the signal peptide. 7 Kelch repeats span residues His56–Ser100, Lys102–Asn155, Thr157–Asn192, Ala193–Lys238, Leu241–Ala290, Gln312–Asp361, and Val363–Glu392. The active-site Proton acceptor is the Glu247.

The protein belongs to the NanM family. As to quaternary structure, homodimer.

Its subcellular location is the periplasm. The enzyme catalyses N-acetyl-alpha-neuraminate = N-acetyl-beta-neuraminate. Its function is as follows. Converts alpha-N-acetylneuranimic acid (Neu5Ac) to the beta-anomer, accelerating the equilibrium between the alpha- and beta-anomers. Probably facilitates sialidase-negative bacteria to compete successfully for limited amounts of extracellular Neu5Ac, which is likely taken up in the beta-anomer. In addition, the rapid removal of sialic acid from solution might be advantageous to the bacterium to damp down host responses. The chain is N-acetylneuraminate epimerase from Yersinia enterocolitica serotype O:8 / biotype 1B (strain NCTC 13174 / 8081).